We begin with the raw amino-acid sequence, 390 residues long: Probable purine permease 7 (390 aa).

A run of 10 helical transmembrane segments spans residues 42 to 62, 74 to 94, 110 to 130, 131 to 151, 169 to 189, 205 to 225, 244 to 264, 286 to 306, 312 to 332, and 341 to 361; these read WLRV…ATIL, TYVV…FRFF, SPSF…VSAY, AYLS…LILA, FTPL…LLVV, VIGF…LSLI, LAIY…FASG, TLAS…GLIF, FSNS…VIVF, and IFSI…HYLD.

Belongs to the purine permeases (TC 2.A.7.14) family.

It localises to the membrane. This is Probable purine permease 7 (PUP7) from Arabidopsis thaliana (Mouse-ear cress).